Consider the following 313-residue polypeptide: Porphobilinogen deaminase 2 (313 aa).

Position 246 is an S-(dipyrrolylmethanemethyl)cysteine (Cys246).

The protein belongs to the HMBS family. Monomer. The cofactor is dipyrromethane.

It catalyses the reaction 4 porphobilinogen + H2O = hydroxymethylbilane + 4 NH4(+). Its pathway is porphyrin-containing compound metabolism; protoporphyrin-IX biosynthesis; coproporphyrinogen-III from 5-aminolevulinate: step 2/4. Tetrapolymerization of the monopyrrole PBG into the hydroxymethylbilane pre-uroporphyrinogen in several discrete steps. This is Porphobilinogen deaminase 2 (hemC2) from Streptomyces coelicolor (strain ATCC BAA-471 / A3(2) / M145).